We begin with the raw amino-acid sequence, 339 residues long: Intelectin-1 (339 aa).

The N-terminal stretch at 1–18 is a signal peptide; the sequence is MLSYSLLLLALAFPAGHA. One can recognise a Fibrinogen C-terminal domain in the interval 58–108; the sequence is GDMNYGYRSCNEIKSSDSRAPDGIYTLATEDGESYQTFCDMTTNGGGWTLV. A disulfide bridge connects residues C67 and C96. Ca(2+) is bound by residues H112, E113, N115, G118, G123, D124, and D159. 3 disulfide bridges follow: C120–C306, C225–C285, and C277–C291. An N-linked (GlcNAc...) asparagine glycan is attached at N189. Ca(2+) is bound by residues N286, E288, E300, and D308. A carbohydrate-binding positions include 288-289 and E300; that span reads EH.

Homotrimer; disulfide-linked. Homohexamer; disulfide-linked. Forms primarily homotrimers in solution, but can also form homohexamers. In terms of processing, N-glycosylated.

The protein resides in the secreted. It localises to the cytoplasmic vesicle. The protein localises to the secretory vesicle. Its function is as follows. Lectin that specifically recognizes microbial carbohydrate chains in a calcium-dependent manner. Binds to microbial glycans that contain a terminal acyclic 1,2-diol moiety, including beta-linked D-galactofuranose (beta-Galf) and D-phosphoglycerol-modified glycans. Binds to S.pneumoniae serotypes with glycans that contain beta-linked D-galactofuranose (beta-Galf) and with D-phosphoglycerol-modified glycans. Can bind a variety of monosaccharides (in vitro). Probably plays a role in the defense system against microorganisms. In Xenopus laevis (African clawed frog), this protein is Intelectin-1 (itln1).